The following is a 302-amino-acid chain: Forkhead box protein R2 (302 aa).

The segment at residues Arg183–Ser285 is a DNA-binding region (fork-head).

Its subcellular location is the nucleus. This is Forkhead box protein R2 (Foxr2) from Mus musculus (Mouse).